The primary structure comprises 335 residues: MVIKFGYKASAEQFGPRELVELGVLAEAHGMDSATVSDHFQPWRHEGGHAPFSLAWMTAVGERTSRLQLGTSVMTPTFRYNPAVVAQAFATMGCLYPGRIMLGVGTGEALNEIATGFAGEWPEFKERFARLREAVALMRELWLGDRVDFEGNYYKTVGASIYDVPEGGIPVYIAAGGPVVARYAGRSGDGFICTSGKGMELYTEKLMPAVAEGAEKADRDVAEIDKMIEIKISYDTDPELALENTRFWAPLSLTPEQKHSIDDPIEMERAADALPIEQVAKRWIVASDPDEAVAQIRPYLDAGLNHLVFHAPGHDQKRFLELFQRDLAPRLRGLA.

Asp-38 serves as a coordination point for coenzyme F420-(gamma-Glu)n. His-39 acts as the Proton donor in catalysis. Residues Thr-75 and 106–107 (TG) contribute to the coenzyme F420-(gamma-Glu)n site. The active-site Proton acceptor is the Glu-108. Coenzyme F420-(gamma-Glu)n-binding positions include Asn-111, 176 to 177 (GG), and 179 to 180 (VV). Residues Thr-194, Lys-197, Lys-258, and Arg-282 each contribute to the substrate site.

The protein belongs to the F420-dependent glucose-6-phosphate dehydrogenase family. In terms of assembly, homodimer.

It carries out the reaction oxidized coenzyme F420-(gamma-L-Glu)(n) + D-glucose 6-phosphate + H(+) = 6-phospho-D-glucono-1,5-lactone + reduced coenzyme F420-(gamma-L-Glu)(n). Its function is as follows. Catalyzes the coenzyme F420-dependent oxidation of glucose 6-phosphate (G6P) to 6-phosphogluconolactone. The polypeptide is F420-dependent glucose-6-phosphate dehydrogenase 1 (Rhodococcus jostii (strain RHA1)).